Reading from the N-terminus, the 361-residue chain is Probable pectinesterase 49 (361 aa).

The first 22 residues, 1-22, serve as a signal peptide directing secretion; that stretch reads MGYISLALVALLVFFASPVVLA. The N-linked (GlcNAc...) asparagine glycan is linked to N128. Substrate is bound at residue Q174. D197 functions as the Proton donor in the catalytic mechanism. D218 functions as the Nucleophile in the catalytic mechanism. Residues R275 and W277 each coordinate substrate.

It belongs to the pectinesterase family. As to expression, expressed in flower buds.

The protein resides in the secreted. Its subcellular location is the cell wall. It catalyses the reaction [(1-&gt;4)-alpha-D-galacturonosyl methyl ester](n) + n H2O = [(1-&gt;4)-alpha-D-galacturonosyl](n) + n methanol + n H(+). It participates in glycan metabolism; pectin degradation; 2-dehydro-3-deoxy-D-gluconate from pectin: step 1/5. Acts in the modification of cell walls via demethylesterification of cell wall pectin. This chain is Probable pectinesterase 49 (PME49), found in Arabidopsis thaliana (Mouse-ear cress).